The primary structure comprises 234 residues: Alpha N-terminal protein methyltransferase 1 (234 aa).

Residues Gly71, Arg76, Asp93–Val95, Leu120–Gln121, and Gln136 each bind S-adenosyl-L-methionine.

It belongs to the methyltransferase superfamily. NTM1 family. In terms of tissue distribution, expressed in uterine cells and PVT neurons of the tail. Expressed in pharynx, intestine and DVB tail neuron.

It catalyses the reaction N-terminal L-alanyl-L-prolyl-L-lysyl-[protein] + 3 S-adenosyl-L-methionine = N-terminal N,N,N-trimethyl-L-alanyl-L-prolyl-L-lysyl-[protein] + 3 S-adenosyl-L-homocysteine + 3 H(+). It carries out the reaction N-terminal L-seryl-L-prolyl-L-lysyl-[protein] + 3 S-adenosyl-L-methionine = N-terminal N,N,N-trimethyl-L-seryl-L-prolyl-L-lysyl-[protein] + 3 S-adenosyl-L-homocysteine + 3 H(+). The enzyme catalyses N-terminal L-prolyl-L-prolyl-L-lysyl-[protein] + 2 S-adenosyl-L-methionine = N-terminal N,N-dimethyl-L-prolyl-L-prolyl-L-lysyl-[protein] + 2 S-adenosyl-L-homocysteine + 2 H(+). Alpha-N-methyltransferase that methylates the N-terminus of target proteins containing the N-terminal motif [Ala/Pro/Ser]-Pro-Lys when the initiator Met is cleaved. Specifically catalyzes mono-, di- or tri-methylation of exposed alpha-amino group of Ala or Ser residue in the [Ala/Ser]-Pro-Lys motif and mono- or di-methylation of Pro in the Pro-Pro-Lys motif. Probably required for the synthesis of neurotransmitter melatonin from serotonin, which plays a role in promoting a sleep-like state, called lethargus, during larval development. The chain is Alpha N-terminal protein methyltransferase 1 from Caenorhabditis elegans.